Consider the following 134-residue polypeptide: Mini-ribonuclease 3 (134 aa).

Asp23 is a catalytic residue.

The protein belongs to the MrnC RNase family. As to quaternary structure, homodimer. Mg(2+) is required as a cofactor.

Its subcellular location is the cytoplasm. Involved in correct processing of both the 5' and 3' ends of 23S rRNA precursor. Processes 30S rRNA precursor transcript even in absence of ribonuclease 3 (Rnc); Rnc processes 30S rRNA into smaller rRNA precursors. The polypeptide is Mini-ribonuclease 3 (Brevibacillus brevis (strain 47 / JCM 6285 / NBRC 100599)).